The sequence spans 319 residues: uncharacterized protein (319 aa).

The disordered stretch occupies residues 281 to 319; that stretch reads KVERKQRRRDDQNIMRSKLPQQRQNPFCSTERPKRARCD. A compositionally biased stretch (polar residues) spans 299–308; that stretch reads LPQQRQNPFC.

It localises to the cytoplasm. The protein localises to the nucleus. This is an uncharacterized protein from Saccharomyces cerevisiae (strain ATCC 204508 / S288c) (Baker's yeast).